The primary structure comprises 105 residues: Small ribosomal subunit protein bS18 (105 aa).

A compositionally biased stretch (polar residues) spans 1–10; that stretch reads MAEETNQQAP. The disordered stretch occupies residues 1-34; that stretch reads MAEETNQQAPESGASSSQPTSRPSGPRGGSGGRK. Residues 12–25 show a composition bias toward low complexity; that stretch reads SGASSSQPTSRPSG.

This sequence belongs to the bacterial ribosomal protein bS18 family. Part of the 30S ribosomal subunit. Forms a tight heterodimer with protein bS6.

Its function is as follows. Binds as a heterodimer with protein bS6 to the central domain of the 16S rRNA, where it helps stabilize the platform of the 30S subunit. The sequence is that of Small ribosomal subunit protein bS18 from Acidobacterium capsulatum (strain ATCC 51196 / DSM 11244 / BCRC 80197 / JCM 7670 / NBRC 15755 / NCIMB 13165 / 161).